Here is a 180-residue protein sequence, read N- to C-terminus: Nucleoside-triphosphatase THEP1 (180 aa).

ATP contacts are provided by residues 9 to 16 (GPAGVGKT) and 104 to 111 (LIVIDEIG).

Belongs to the THEP1 NTPase family.

It carries out the reaction a ribonucleoside 5'-triphosphate + H2O = a ribonucleoside 5'-diphosphate + phosphate + H(+). Functionally, has nucleotide phosphatase activity towards ATP, GTP, CTP, TTP and UTP. May hydrolyze nucleoside diphosphates with lower efficiency. The chain is Nucleoside-triphosphatase THEP1 from Thermococcus kodakarensis (strain ATCC BAA-918 / JCM 12380 / KOD1) (Pyrococcus kodakaraensis (strain KOD1)).